Consider the following 209-residue polypeptide: Lysine-rich arabinogalactan protein 18 (209 aa).

Residues 1–21 form the signal peptide; sequence MDRNFLLTVTLICIVVAGVGG. Residues 21–185 form a disordered region; that stretch reads GQSPISSPTK…PSADDQSGAA (165 aa). Residues 23-79 are compositionally biased toward low complexity; sequence SPISSPTKSPTTPSAPTTSPTKSPAVTSPTTAPAKTPTASASSPVESPKSPAPVSES. 2 stretches are compositionally biased toward pro residues: residues 80 to 95 and 103 to 119; these read SPPP…PVPA and SSPP…PAPV. The segment covering 132–145 has biased composition (basic residues); the sequence is SKHKKTTKKSKKHQ. Over residues 149-164 the composition is skewed to pro residues; the sequence is APAPELLGPPAPPTES. Gly183 is lipidated: GPI-anchor amidated glycine. Residues 184 to 209 constitute a propeptide, removed in mature form; the sequence is AASTRVLRNVAVGAVATAWAVLVMAF.

Belongs to the lysine-rich AGP family. O-glycosylated on the hydroxyproline residues. As to expression, predominantly expressed in flowers, and moderately expressed in roots, stems and young leaves.

It localises to the cell membrane. Functionally, proteoglycan that seems to be implicated in diverse developmental roles such as differentiation, cell-cell recognition, embryogenesis and programmed cell death. The polypeptide is Lysine-rich arabinogalactan protein 18 (AGP18) (Arabidopsis thaliana (Mouse-ear cress)).